The chain runs to 156 residues: Small ribosomal subunit protein uS7 (156 aa).

It belongs to the universal ribosomal protein uS7 family. In terms of assembly, part of the 30S ribosomal subunit. Contacts proteins S9 and S11.

Its function is as follows. One of the primary rRNA binding proteins, it binds directly to 16S rRNA where it nucleates assembly of the head domain of the 30S subunit. Is located at the subunit interface close to the decoding center, probably blocks exit of the E-site tRNA. This is Small ribosomal subunit protein uS7 from Teredinibacter turnerae (strain ATCC 39867 / T7901).